The sequence spans 416 residues: 3-isopropylmalate dehydratase large subunit (416 aa).

Residues Cys-297, Cys-357, and Cys-360 each contribute to the [4Fe-4S] cluster site.

It belongs to the aconitase/IPM isomerase family. LeuC type 2 subfamily. In terms of assembly, heterodimer of LeuC and LeuD. It depends on [4Fe-4S] cluster as a cofactor.

The enzyme catalyses (2R,3S)-3-isopropylmalate = (2S)-2-isopropylmalate. It functions in the pathway amino-acid biosynthesis; L-leucine biosynthesis; L-leucine from 3-methyl-2-oxobutanoate: step 2/4. Functionally, catalyzes the isomerization between 2-isopropylmalate and 3-isopropylmalate, via the formation of 2-isopropylmaleate. This is 3-isopropylmalate dehydratase large subunit from Methanoregula boonei (strain DSM 21154 / JCM 14090 / 6A8).